We begin with the raw amino-acid sequence, 150 residues long: Probable histone H2A.7 (150 aa).

The segment covering 1 to 12 (MESTGKVKKAFG) has biased composition (basic residues). Disordered regions lie at residues 1-27 (MEST…SVSK) and 129-150 (KSAT…PKKA). The residue at position 146 (serine 146) is a Phosphoserine. The SPKK motif signature appears at 146 to 149 (SPKK).

The protein belongs to the histone H2A family. As to quaternary structure, the nucleosome is a histone octamer containing two molecules each of H2A, H2B, H3 and H4 assembled in one H3-H4 heterotetramer and two H2A-H2B heterodimers. The octamer wraps approximately 147 bp of DNA. In terms of processing, not ubiquitinated. As to expression, strong expression through-out the roots and leaves. Also found in meristems and dividing cells.

It is found in the nucleus. The protein localises to the chromosome. In terms of biological role, core component of nucleosome. Nucleosomes wrap and compact DNA into chromatin, limiting DNA accessibility to the cellular machineries which require DNA as a template. Histones thereby play a central role in transcription regulation, DNA repair, DNA replication and chromosomal stability. DNA accessibility is regulated via a complex set of post-translational modifications of histones, also called histone code, and nucleosome remodeling. The chain is Probable histone H2A.7 from Arabidopsis thaliana (Mouse-ear cress).